A 181-amino-acid chain; its full sequence is Translationally-controlled tumor protein homolog (181 aa).

Positions 1–181 (MLIFKDAFTD…VKEALIEEKQ (181 aa)) constitute a TCTP domain.

It belongs to the TCTP family.

The protein localises to the cytoplasm. Functionally, involved in calcium binding and microtubule stabilization. In Brugia malayi (Filarial nematode worm), this protein is Translationally-controlled tumor protein homolog.